The sequence spans 361 residues: Phosphoserine aminotransferase (361 aa).

2 residues coordinate L-glutamate: Ser9 and Arg42. Pyridoxal 5'-phosphate contacts are provided by residues 76 to 77 (AR), Trp102, Thr153, Asp173, and Gln196. Lys197 carries the N6-(pyridoxal phosphate)lysine modification. 238 to 239 (NT) is a pyridoxal 5'-phosphate binding site.

Belongs to the class-V pyridoxal-phosphate-dependent aminotransferase family. SerC subfamily. In terms of assembly, homodimer. Pyridoxal 5'-phosphate serves as cofactor.

Its subcellular location is the cytoplasm. It carries out the reaction O-phospho-L-serine + 2-oxoglutarate = 3-phosphooxypyruvate + L-glutamate. The enzyme catalyses 4-(phosphooxy)-L-threonine + 2-oxoglutarate = (R)-3-hydroxy-2-oxo-4-phosphooxybutanoate + L-glutamate. The protein operates within amino-acid biosynthesis; L-serine biosynthesis; L-serine from 3-phospho-D-glycerate: step 2/3. Its pathway is cofactor biosynthesis; pyridoxine 5'-phosphate biosynthesis; pyridoxine 5'-phosphate from D-erythrose 4-phosphate: step 3/5. Catalyzes the reversible conversion of 3-phosphohydroxypyruvate to phosphoserine and of 3-hydroxy-2-oxo-4-phosphonooxybutanoate to phosphohydroxythreonine. The polypeptide is Phosphoserine aminotransferase (Serratia proteamaculans (strain 568)).